Here is a 277-residue protein sequence, read N- to C-terminus: Shikimate dehydrogenase (NADP(+)) (277 aa).

Shikimate is bound by residues 18–20 (SKS) and Thr65. The active-site Proton acceptor is the Lys69. Position 81 (Glu81) interacts with NADP(+). Shikimate-binding residues include Asn90 and Asp106. Residues 130–134 (GAGGA), 154–159 (NRTFSK), and Met217 each bind NADP(+). Residue Tyr219 coordinates shikimate. Gly241 is an NADP(+) binding site.

This sequence belongs to the shikimate dehydrogenase family. In terms of assembly, homodimer.

It carries out the reaction shikimate + NADP(+) = 3-dehydroshikimate + NADPH + H(+). It functions in the pathway metabolic intermediate biosynthesis; chorismate biosynthesis; chorismate from D-erythrose 4-phosphate and phosphoenolpyruvate: step 4/7. Involved in the biosynthesis of the chorismate, which leads to the biosynthesis of aromatic amino acids. Catalyzes the reversible NADPH linked reduction of 3-dehydroshikimate (DHSA) to yield shikimate (SA). The polypeptide is Shikimate dehydrogenase (NADP(+)) (Vibrio parahaemolyticus serotype O3:K6 (strain RIMD 2210633)).